The sequence spans 462 residues: uncharacterized protein (462 aa).

Belongs to the IIV-6 329R family.

This is an uncharacterized protein from Aedes vexans (Inland floodwater mosquito).